Consider the following 530-residue polypeptide: Estrogen receptor beta (530 aa).

A modulating region spans residues 1-148 (MEIKNSPSSL…SPSAKRDAHF (148 aa)). Serine 61 is modified (phosphoserine; alternate). The O-linked (GlcNAc) serine; alternate glycan is linked to serine 61. Phosphoserine; by MAPK is present on residues serine 87 and serine 105. 2 NR C4-type zinc fingers span residues 149-169 (CAVC…CEGC) and 185-209 (CPAT…LRKC). Positions 149–214 (CAVCSDYASG…RLRKCYEVGM (66 aa)) form a DNA-binding region, nuclear receptor. An NR LBD domain is found at 264–498 (SPEQLVLTLL…DLLLEMLNAH (235 aa)). Residues 506–515 (SISGSECCST) are compositionally biased toward polar residues. The segment at 506 to 530 (SISGSECCSTEDSKSKEGSQNLQSQ) is disordered.

The protein belongs to the nuclear hormone receptor family. NR3 subfamily. In terms of assembly, binds DNA as a homodimer. Can form a heterodimer with ESR1. Interacts with NCOA1, NCOA3, NCOA5 and NCOA6 coactivators, leading to a strong increase of transcription of target genes. Interacts with UBE1C and AKAP13. Interacts with DNTTIP2. Interacts with CCDC62 in the presence of estradiol/E2; this interaction seems to enhance the transcription of target genes. Interacts with DNAAF4. Interacts with PRMT2. Interacts with CCAR2 (via N-terminus) in a ligand-independent manner. Interacts with RBM39, in the presence of estradiol (E2). Interacts with STUB1/CHIP. Post-translationally, phosphorylation at Ser-87 and Ser-105 recruits NCOA1. In terms of tissue distribution, expressed in prostate, ovary, Leydig cells and in epithelium of the efferent ductules and of the initial segment of the epididymis.

The protein resides in the nucleus. Its function is as follows. Nuclear hormone receptor. Binds estrogens with an affinity similar to that of ESR1/ER-alpha, and activates expression of reporter genes containing estrogen response elements (ERE) in an estrogen-dependent manner. This Mus musculus (Mouse) protein is Estrogen receptor beta (Esr2).